Here is a 433-residue protein sequence, read N- to C-terminus: Alpha-(1-&gt;3)-arabinofuranosyltransferase (433 aa).

The next 10 membrane-spanning stretches (helical) occupy residues 118-138, 140-160, 164-184, 197-217, 224-244, 280-300, 310-330, 333-353, 356-376, and 385-405; these read LFIS…LRMF, FTLT…TETV, LVFT…LRWL, LAIG…LLPL, ALVA…PLVS, WLIL…LWLL, LFWF…VMSL, GYYS…NSVI, WPAW…LFNW, and YLKI…VLYF.

Belongs to the glycosyltransferase 87 family.

It is found in the cell membrane. It carries out the reaction Adds an alpha-D-arabinofuranosyl group from trans,octacis-decaprenylphospho-beta-D-arabinofuranose at the 3-O-position of an alpha-(1-&gt;5)-arabinofuranan chain attached to a beta-(1-&gt;5)-galactofuranan chain.. Its pathway is cell wall biogenesis; cell wall polysaccharide biosynthesis. Functionally, involved in the biosynthesis of the arabinogalactan (AG) region of the mycolylarabinogalactan-peptidoglycan (mAGP) complex, an essential component of the mycobacterial cell wall. Catalyzes the addition of an arabinofuranosyl (Araf) residue from the sugar donor beta-D-arabinofuranosyl-1-monophosphoryldecaprenol (DPA) on the C-3 of an alpha-(1-&gt;5)-linked Araf from the arabinan backbone of AG. This Mycobacterium tuberculosis (strain CDC 1551 / Oshkosh) protein is Alpha-(1-&gt;3)-arabinofuranosyltransferase (aftC).